We begin with the raw amino-acid sequence, 438 residues long: Xylose isomerase (438 aa).

Active-site residues include histidine 100 and aspartate 103. 7 residues coordinate Mg(2+): glutamate 231, glutamate 267, histidine 270, aspartate 295, aspartate 306, aspartate 308, and aspartate 338.

Belongs to the xylose isomerase family. As to quaternary structure, homotetramer. The cofactor is Mg(2+).

It is found in the cytoplasm. It catalyses the reaction alpha-D-xylose = alpha-D-xylulofuranose. The chain is Xylose isomerase from Thermoanaerobacter sp. (strain X514).